Here is a 144-residue protein sequence, read N- to C-terminus: Large ribosomal subunit protein uL16 (144 aa).

It belongs to the universal ribosomal protein uL16 family. Part of the 50S ribosomal subunit.

Binds 23S rRNA and is also seen to make contacts with the A and possibly P site tRNAs. This is Large ribosomal subunit protein uL16 from Lactiplantibacillus plantarum (strain ATCC BAA-793 / NCIMB 8826 / WCFS1) (Lactobacillus plantarum).